Here is a 406-residue protein sequence, read N- to C-terminus: Exodeoxyribonuclease 7 large subunit (406 aa).

This sequence belongs to the XseA family. As to quaternary structure, heterooligomer composed of large and small subunits.

It localises to the cytoplasm. The enzyme catalyses Exonucleolytic cleavage in either 5'- to 3'- or 3'- to 5'-direction to yield nucleoside 5'-phosphates.. Its function is as follows. Bidirectionally degrades single-stranded DNA into large acid-insoluble oligonucleotides, which are then degraded further into small acid-soluble oligonucleotides. The chain is Exodeoxyribonuclease 7 large subunit from Desulforudis audaxviator (strain MP104C).